The chain runs to 575 residues: Transmembrane protein 108 (575 aa).

The chain crosses the membrane as a helical span at residues 9–29; that stretch reads YCQLLSFLLILALTEALAFAI. Residues 31 to 169 form an interaction with SH3GL2 region; it reads EPSPRESLQV…TTTRRPPRPP (139 aa). The tract at residues 65-398 is disordered; that stretch reads MLTPNPDGPP…PSRVSESTIS (334 aa). Low complexity predominate over residues 74-87; sequence PSQAAAPMATPTPR. Residues 95–115 are compositionally biased toward polar residues; sequence HTISTIAATVTAPHSESSLST. Over residues 146–160 the composition is skewed to low complexity; that stretch reads PPGATSRPTTAPPRT. The segment at 173-407 is interaction with DST (isoform 1); sequence RKGAGNSSRP…SGAKEETVAT (235 aa). The span at 244–271 shows a compositional bias: polar residues; the sequence is YSSSPQPQTVAATTVPSNTSWAPTTTSL. Low complexity predominate over residues 290–318; sequence TFTSQGGTPDATAASGAPVSPQAAPVPSQ. Over residues 329–352 the composition is skewed to polar residues; the sequence is PSHSDSWLTVTPGTSRPLSTSSGV. The span at 353 to 366 shows a compositional bias: low complexity; sequence FTAATGPTPAAFDT. The span at 367-398 shows a compositional bias: polar residues; it reads SVSAPSQGIPQGASTTPQAPTHPSRVSESTIS. Residues 469–489 traverse the membrane as a helical segment; the sequence is IAWVILAISVPISSCSVLLTV. Residues 490-575 form an interaction with CYFIP2 region; it reads CCMKRKKKTA…FVGNDQVSEI (86 aa).

Interacts with DST (isoform 1). Interacts with SH3GL2. Interacts (via N-terminus) with CYFIP1 and CYFIP2; the interactions associate TMEM108 with the WAVE1 complex. Glycosylated.

It is found in the membrane. The protein localises to the postsynaptic density. Its subcellular location is the endosome membrane. The protein resides in the cell projection. It localises to the axon. It is found in the dendrite. The protein localises to the early endosome. Functionally, transmembrane protein required for proper cognitive functions. Involved in the development of dentate gyrus (DG) neuron circuitry, is necessary for AMPA receptors surface expression and proper excitatory postsynaptic currents of DG granule neurons. Regulates the organization and stability of the microtubule network of sensory neurons to allow axonal transport. Through the interaction with DST, mediates the docking of the dynein/dynactin motor complex to vesicle cargos for retrograde axonal transport. In hippocampal neurons, required for BDNF-dependent dendrite outgrowth. Cooperates with SH3GL2 and recruits the WAVE1 complex to facilitate actin-dependent BDNF:NTRK2 early endocytic trafficking and mediate signaling from early endosomes. This Homo sapiens (Human) protein is Transmembrane protein 108.